Reading from the N-terminus, the 430-residue chain is Glutamate-1-semialdehyde 2,1-aminomutase (430 aa).

Lys-267 carries the post-translational modification N6-(pyridoxal phosphate)lysine.

It belongs to the class-III pyridoxal-phosphate-dependent aminotransferase family. HemL subfamily. As to quaternary structure, homodimer. Pyridoxal 5'-phosphate serves as cofactor.

The protein resides in the cytoplasm. The catalysed reaction is (S)-4-amino-5-oxopentanoate = 5-aminolevulinate. It functions in the pathway porphyrin-containing compound metabolism; protoporphyrin-IX biosynthesis; 5-aminolevulinate from L-glutamyl-tRNA(Glu): step 2/2. The polypeptide is Glutamate-1-semialdehyde 2,1-aminomutase (Anaeromyxobacter sp. (strain K)).